A 328-amino-acid polypeptide reads, in one-letter code: Phosphate acyltransferase (328 aa).

Belongs to the PlsX family. As to quaternary structure, homodimer. Probably interacts with PlsY.

It localises to the cytoplasm. It catalyses the reaction a fatty acyl-[ACP] + phosphate = an acyl phosphate + holo-[ACP]. The protein operates within lipid metabolism; phospholipid metabolism. Catalyzes the reversible formation of acyl-phosphate (acyl-PO(4)) from acyl-[acyl-carrier-protein] (acyl-ACP). This enzyme utilizes acyl-ACP as fatty acyl donor, but not acyl-CoA. This Mycoplasmoides gallisepticum (strain R(low / passage 15 / clone 2)) (Mycoplasma gallisepticum) protein is Phosphate acyltransferase.